Reading from the N-terminus, the 89-residue chain is Small ribosomal subunit protein uS15 (89 aa).

Residues 1-20 (MSITQERKSALIAEHARGKT) are compositionally biased toward basic and acidic residues. Residues 1–24 (MSITQERKSALIAEHARGKTDTGS) are disordered.

The protein belongs to the universal ribosomal protein uS15 family. In terms of assembly, part of the 30S ribosomal subunit. Forms a bridge to the 50S subunit in the 70S ribosome, contacting the 23S rRNA.

One of the primary rRNA binding proteins, it binds directly to 16S rRNA where it helps nucleate assembly of the platform of the 30S subunit by binding and bridging several RNA helices of the 16S rRNA. Its function is as follows. Forms an intersubunit bridge (bridge B4) with the 23S rRNA of the 50S subunit in the ribosome. This chain is Small ribosomal subunit protein uS15, found in Maricaulis maris (strain MCS10) (Caulobacter maris).